The primary structure comprises 187 residues: Phosphatidylethanolamine-binding protein 1 (187 aa).

An N-acetylalanine; in peptide hippocampal cholinergic neurostimulating modification is found at Ala-2. Residue Ser-6 is modified to Phosphoserine. A Phosphothreonine modification is found at Thr-42. 5 positions are modified to phosphoserine: Ser-51, Ser-52, Ser-54, Ser-98, and Ser-132. An interaction with RAF1 region spans residues 93-134; sequence KGNDISSGTVLSDYVGSGPPSGTGLHRYVWLVYEQEQPLSCD.

This sequence belongs to the phosphatidylethanolamine-binding protein family. In terms of assembly, has a tendency to form dimers by disulfide cross-linking. Interacts with RAF1 and this interaction is enhanced if RAF1 is phosphorylated on residues 'Ser-338', 'Ser-339', 'Tyr-340' and 'Tyr-341'. Interacts with ALOX15; in response to IL13/interleukin-13, prevents the interaction of PEBP1 with RAF1 to activate the ERK signaling cascade. As to expression, HCNP is expressed in brain. Increased expression in aged senescence-accelerated mice.

The protein resides in the cytoplasm. Binds ATP, opioids and phosphatidylethanolamine. Has lower affinity for phosphatidylinositol and phosphatidylcholine. Serine protease inhibitor which inhibits thrombin, neuropsin and chymotrypsin but not trypsin, tissue type plasminogen activator and elastase. Inhibits the kinase activity of RAF1 by inhibiting its activation and by dissociating the RAF1/MEK complex and acting as a competitive inhibitor of MEK phosphorylation. Its function is as follows. HCNP may be involved in the function of the presynaptic cholinergic neurons of the central nervous system. HCNP increases the production of choline acetyltransferase but not acetylcholinesterase. Seems to be mediated by a specific receptor. This Mus musculus (Mouse) protein is Phosphatidylethanolamine-binding protein 1 (Pebp1).